The sequence spans 406 residues: 2,3-diketo-5-methylthiopentyl-1-phosphate enolase (406 aa).

K94 (proton acceptor) is an active-site residue. Residues K143, 169-172 (KDDE), H260, G332, and 354-355 (GG) contribute to the substrate site. The Mg(2+) site is built by K169, D171, and E172. K169 carries the post-translational modification N6-carboxylysine.

Belongs to the RuBisCO large chain family. Type IV subfamily. As to quaternary structure, homodimer. Requires Mg(2+) as cofactor.

The enzyme catalyses 5-methylsulfanyl-2,3-dioxopentyl phosphate = 2-hydroxy-5-methylsulfanyl-3-oxopent-1-enyl phosphate. Its pathway is amino-acid biosynthesis; L-methionine biosynthesis via salvage pathway; L-methionine from S-methyl-5-thio-alpha-D-ribose 1-phosphate: step 3/6. Catalyzes the enolization of 2,3-diketo-5-methylthiopentyl-1-phosphate (DK-MTP-1-P) into 2-hydroxy-3-keto-5-methylthiopentenyl-1-phosphate (HK-MTPenyl-1-P). The chain is 2,3-diketo-5-methylthiopentyl-1-phosphate enolase from Bacillus pumilus (strain SAFR-032).